Reading from the N-terminus, the 1071-residue chain is ATP-dependent helicase/deoxyribonuclease subunit B (1071 aa).

It belongs to the helicase family. AddB/RexB type 2 subfamily. In terms of assembly, heterodimer of AddA and RexB. It depends on Mg(2+) as a cofactor.

Functionally, the heterodimer acts as both an ATP-dependent DNA helicase and an ATP-dependent, dual-direction single-stranded exonuclease. Recognizes the chi site generating a DNA molecule suitable for the initiation of homologous recombination. This subunit has 5' -&gt; 3' nuclease activity but not helicase activity. This is ATP-dependent helicase/deoxyribonuclease subunit B from Streptococcus pyogenes serotype M18 (strain MGAS8232).